We begin with the raw amino-acid sequence, 389 residues long: Inactive serine/threonine-protein kinase ZRK12 (389 aa).

In terms of domain architecture, Protein kinase spans 41 to 342; the sequence is SADEIRKATN…ETQFDSHQDI (302 aa). ATP-binding positions include 47–55 and K84; that span reads KATNNFGVS. Phosphotyrosine is present on Y129. T214 carries the post-translational modification Phosphothreonine. Phosphotyrosine is present on Y222.

The protein belongs to the protein kinase superfamily. Ser/Thr protein kinase family.

Together with RPP13L4/ZAR1, involved in the regulation of the ambient temperature-sensitive intersection of growth and immune response in the absence of pathogens. This is Inactive serine/threonine-protein kinase ZRK12 from Arabidopsis thaliana (Mouse-ear cress).